The following is a 234-amino-acid chain: Triosephosphate isomerase (234 aa).

8 to 10 lines the substrate pocket; it reads NFK. The Electrophile role is filled by His-90. The active-site Proton acceptor is the Glu-159. Substrate is bound by residues Gly-165 and Ser-197.

Belongs to the triosephosphate isomerase family. In terms of assembly, homodimer.

Its subcellular location is the cytoplasm. It catalyses the reaction D-glyceraldehyde 3-phosphate = dihydroxyacetone phosphate. It functions in the pathway carbohydrate biosynthesis; gluconeogenesis. Its pathway is carbohydrate degradation; glycolysis; D-glyceraldehyde 3-phosphate from glycerone phosphate: step 1/1. Its function is as follows. Involved in the gluconeogenesis. Catalyzes stereospecifically the conversion of dihydroxyacetone phosphate (DHAP) to D-glyceraldehyde-3-phosphate (G3P). This Helicobacter pylori (strain P12) protein is Triosephosphate isomerase.